Consider the following 211-residue polypeptide: Bacteriorhodopsin (211 aa).

The chain crosses the membrane as a helical span at residues 1 to 19 (IWLWLGTAGMFLGMLYFIA). Residues 20–33 (RGWGETDSRRQKFY) lie on the Cytoplasmic side of the membrane. The chain crosses the membrane as a helical span at residues 34–52 (IATILITAIAFVNYLAMAL). The Extracellular portion of the chain corresponds to 53–68 (GFGLTIVEFAGEEHPI). A helical membrane pass occupies residues 69-86 (YWARYSDWLFTTPLLLYD). At 87-97 (LGLLAGADRNT) the chain is on the cytoplasmic side. A helical transmembrane segment spans residues 98-117 (ITSLVSLDVLMIGTGLVATL). Residues 118 to 130 (SAGSGVLSAGAER) lie on the Extracellular side of the membrane. The helical transmembrane segment at 131 to 150 (LVWWGISTAFLLVLLYFLFS) threads the bilayer. Over 151 to 168 (SLSGRVADLPSDTRSTFK) the chain is Cytoplasmic. The helical transmembrane segment at 169–187 (TLRNLVTVVWLVYPVWWLI) threads the bilayer. Residues 188 to 199 (GTEGIGLVGIGI) lie on the Extracellular side of the membrane. Residues 200–211 (ETAGFMVIDLTA) traverse the membrane as a helical segment.

Belongs to the archaeal/bacterial/fungal opsin family.

Its subcellular location is the cell membrane. Functionally, light-driven proton pump. The protein is Bacteriorhodopsin (bop) of Halobacterium halobium (strain port).